Consider the following 490-residue polypeptide: Probable cytochrome P450 308a1 (490 aa).

Cys431 lines the heme pocket.

Belongs to the cytochrome P450 family. The cofactor is heme.

The protein resides in the endoplasmic reticulum membrane. It is found in the microsome membrane. Functionally, may be involved in the metabolism of insect hormones and in the breakdown of synthetic insecticides. The polypeptide is Probable cytochrome P450 308a1 (Cyp308a1) (Drosophila melanogaster (Fruit fly)).